The chain runs to 227 residues: Cytochrome c oxidase subunit 2 (227 aa).

Residues 1 to 14 lie on the Mitochondrial intermembrane side of the membrane; it reads MAHAAQVGLQDATS. A helical membrane pass occupies residues 15 to 45; sequence PIMEELITFHDHALMIIFLICFLVLYALFLT. Over 46-59 the chain is Mitochondrial matrix; it reads LTTKLTNTNISDAQ. A helical membrane pass occupies residues 60 to 87; it reads EMETVWTILPAIILVLIALPSLRILYMT. Residues 88-227 lie on the Mitochondrial intermembrane side of the membrane; it reads DEVNDPSLTI…IFEMGPVFTL (140 aa). Positions 161, 196, 198, 200, 204, and 207 each coordinate Cu cation. Glu-198 contacts Mg(2+).

The protein belongs to the cytochrome c oxidase subunit 2 family. Component of the cytochrome c oxidase (complex IV, CIV), a multisubunit enzyme composed of 14 subunits. The complex is composed of a catalytic core of 3 subunits MT-CO1, MT-CO2 and MT-CO3, encoded in the mitochondrial DNA, and 11 supernumerary subunits COX4I1 (or COX4I2), COX5A, COX5B, COX6A1 (or COX6A2), COX6B1 (or COX6B2), COX6C, COX7A2 (or COX7A1), COX7B, COX7C, COX8A and NDUFA4, which are encoded in the nuclear genome. The complex exists as a monomer or a dimer and forms supercomplexes (SCs) in the inner mitochondrial membrane with NADH-ubiquinone oxidoreductase (complex I, CI) and ubiquinol-cytochrome c oxidoreductase (cytochrome b-c1 complex, complex III, CIII), resulting in different assemblies (supercomplex SCI(1)III(2)IV(1) and megacomplex MCI(2)III(2)IV(2)). Found in a complex with TMEM177, COA6, COX18, COX20, SCO1 and SCO2. Interacts with TMEM177 in a COX20-dependent manner. Interacts with COX20. Interacts with COX16. Cu cation is required as a cofactor.

The protein resides in the mitochondrion inner membrane. It carries out the reaction 4 Fe(II)-[cytochrome c] + O2 + 8 H(+)(in) = 4 Fe(III)-[cytochrome c] + 2 H2O + 4 H(+)(out). Its function is as follows. Component of the cytochrome c oxidase, the last enzyme in the mitochondrial electron transport chain which drives oxidative phosphorylation. The respiratory chain contains 3 multisubunit complexes succinate dehydrogenase (complex II, CII), ubiquinol-cytochrome c oxidoreductase (cytochrome b-c1 complex, complex III, CIII) and cytochrome c oxidase (complex IV, CIV), that cooperate to transfer electrons derived from NADH and succinate to molecular oxygen, creating an electrochemical gradient over the inner membrane that drives transmembrane transport and the ATP synthase. Cytochrome c oxidase is the component of the respiratory chain that catalyzes the reduction of oxygen to water. Electrons originating from reduced cytochrome c in the intermembrane space (IMS) are transferred via the dinuclear copper A center (CU(A)) of subunit 2 and heme A of subunit 1 to the active site in subunit 1, a binuclear center (BNC) formed by heme A3 and copper B (CU(B)). The BNC reduces molecular oxygen to 2 water molecules using 4 electrons from cytochrome c in the IMS and 4 protons from the mitochondrial matrix. The sequence is that of Cytochrome c oxidase subunit 2 (MT-CO2) from Homo sapiens (Human).